Here is a 181-residue protein sequence, read N- to C-terminus: Putative ankyrin repeat protein RBE_0150 (181 aa).

4 ANK repeats span residues 50 to 79 (IGQK…KLGT), 83 to 114 (LGRT…DINA), 118 to 147 (SGST…DYFT), and 151 to 180 (LGQT…AGYY).

This is Putative ankyrin repeat protein RBE_0150 from Rickettsia bellii (strain RML369-C).